A 571-amino-acid chain; its full sequence is Hemagglutinin-neuraminidase (571 aa).

The Intravirion portion of the chain corresponds to 1–25 (MEDYSNLSLKSIPKRTCRIIFRTAT). A helical transmembrane segment spans residues 26–46 (ILGICTLIVLCSSILHEIIHL). Residues 47–571 (DVSSGLMDSD…IIPFLRELIP (525 aa)) lie on the Virion surface side of the membrane. Disulfide bonds link Cys166-Cys190, Cys180-Cys241, and Cys232-Cys245. The segment at 228 to 233 (NRKSCS) is involved in neuraminidase activity. Asn272, Asn284, and Asn335 each carry an N-linked (GlcNAc...) asparagine; by host glycan. 3 disulfide bridges follow: Cys338–Cys459, Cys370–Cys380, and Cys453–Cys463. Asn386, Asn454, Asn498, Asn501, Asn517, and Asn522 each carry an N-linked (GlcNAc...) asparagine; by host glycan. Cys535 and Cys546 form a disulfide bridge.

The protein belongs to the paramyxoviruses hemagglutinin-neuraminidase family. In terms of assembly, homotetramer; composed of disulfide-linked homodimers. Interacts with F protein trimer.

It is found in the virion membrane. The protein resides in the host cell membrane. The enzyme catalyses Hydrolysis of alpha-(2-&gt;3)-, alpha-(2-&gt;6)-, alpha-(2-&gt;8)- glycosidic linkages of terminal sialic acid residues in oligosaccharides, glycoproteins, glycolipids, colominic acid and synthetic substrates.. Its function is as follows. Attaches the virus to sialic acid-containing cell receptors and thereby initiating infection. Binding of HN protein to the receptor induces a conformational change that allows the F protein to trigger virion/cell membranes fusion. Functionally, neuraminidase activity ensures the efficient spread of the virus by dissociating the mature virions from the neuraminic acid containing glycoproteins. The polypeptide is Hemagglutinin-neuraminidase (HN) (Homo sapiens (Human)).